Reading from the N-terminus, the 199-residue chain is Recombination protein RecR (199 aa).

The C4-type zinc finger occupies 56–71 (CATCGNVAQEEQCNIC). The 96-residue stretch at 79 to 174 (SVICVVEEPK…KVTRLASGLP (96 aa)) folds into the Toprim domain.

The protein belongs to the RecR family.

May play a role in DNA repair. It seems to be involved in an RecBC-independent recombinational process of DNA repair. It may act with RecF and RecO. This Streptomyces coelicolor (strain ATCC BAA-471 / A3(2) / M145) protein is Recombination protein RecR.